The chain runs to 182 residues: Large ribosomal subunit protein uL10 (182 aa).

The protein belongs to the universal ribosomal protein uL10 family. In terms of assembly, part of the ribosomal stalk of the 50S ribosomal subunit. The N-terminus interacts with L11 and the large rRNA to form the base of the stalk. The C-terminus forms an elongated spine to which L12 dimers bind in a sequential fashion forming a multimeric L10(L12)X complex.

Forms part of the ribosomal stalk, playing a central role in the interaction of the ribosome with GTP-bound translation factors. The polypeptide is Large ribosomal subunit protein uL10 (Microcystis aeruginosa (strain NIES-843 / IAM M-2473)).